The following is a 270-amino-acid chain: Formamidopyrimidine-DNA glycosylase (270 aa).

Proline 2 serves as the catalytic Schiff-base intermediate with DNA. Residue glutamate 3 is the Proton donor of the active site. Lysine 58 serves as the catalytic Proton donor; for beta-elimination activity. The DNA site is built by histidine 91, arginine 110, and lysine 151. The FPG-type zinc finger occupies 236–270 (LVYGKAGAPCTECNTPLKEIRMNNRSTVYCPRCQR). The active-site Proton donor; for delta-elimination activity is the arginine 260.

The protein belongs to the FPG family. Monomer. Requires Zn(2+) as cofactor.

It carries out the reaction Hydrolysis of DNA containing ring-opened 7-methylguanine residues, releasing 2,6-diamino-4-hydroxy-5-(N-methyl)formamidopyrimidine.. It catalyses the reaction 2'-deoxyribonucleotide-(2'-deoxyribose 5'-phosphate)-2'-deoxyribonucleotide-DNA = a 3'-end 2'-deoxyribonucleotide-(2,3-dehydro-2,3-deoxyribose 5'-phosphate)-DNA + a 5'-end 5'-phospho-2'-deoxyribonucleoside-DNA + H(+). Involved in base excision repair of DNA damaged by oxidation or by mutagenic agents. Acts as a DNA glycosylase that recognizes and removes damaged bases. Has a preference for oxidized purines, such as 7,8-dihydro-8-oxoguanine (8-oxoG). Has AP (apurinic/apyrimidinic) lyase activity and introduces nicks in the DNA strand. Cleaves the DNA backbone by beta-delta elimination to generate a single-strand break at the site of the removed base with both 3'- and 5'-phosphates. This Marinobacter nauticus (strain ATCC 700491 / DSM 11845 / VT8) (Marinobacter aquaeolei) protein is Formamidopyrimidine-DNA glycosylase.